A 57-amino-acid polypeptide reads, in one-letter code: Potassium channel toxin MeuTXKalpha2 (57 aa).

A signal peptide spans Met-1 to Thr-19. The propeptide occupies Ile-20 to Ala-28. Intrachain disulfides connect Cys-31/Cys-47, Cys-34/Cys-52, and Cys-38/Cys-54.

The protein belongs to the short scorpion toxin superfamily. Potassium channel inhibitor family. Alpha-KTx 08 subfamily. As to expression, expressed by the venom gland.

The protein resides in the secreted. Its function is as follows. Inhibits Kv1.1/KCNA1, Kv1.3/KCNA3 and Shaker potassium channels. The protein is Potassium channel toxin MeuTXKalpha2 of Mesobuthus eupeus (Lesser Asian scorpion).